The following is a 212-amino-acid chain: MEPLYQQTHKQVHEIQSHMGRLETADKQSVHLVENEIQASIDQIFSHLERLEILSSKEPPNRRQNAKLRVDQLKYDVQHLQTALRNFQHRRQAKEQQERQRDELLSRTFTTNDSDTTIPMDESLQFNSSLQNIHHGMDDLIGGGHSILEGLRAQRLTLKGTQKKILDIANMLGLSNTVMRLIEKRAFQDKYFMIGGMLLTCAVMFLVVQYLT.

M1 bears the N-acetylmethionine mark. Over 1-190 (MEPLYQQTHK…LIEKRAFQDK (190 aa)) the chain is Cytoplasmic. The stretch at 61–107 (NRRQNAKLRVDQLKYDVQHLQTALRNFQHRRQAKEQQERQRDELLSR) forms a coiled coil. Residues 118-120 (IPM) carry the IxM motif; signal for cargo packaging into COPII-coated vesicles motif. The helical; Anchor for type IV membrane protein transmembrane segment at 191 to 211 (YFMIGGMLLTCAVMFLVVQYL) threads the bilayer. A topological domain (vesicular) is located at residue T212.

This sequence belongs to the GOSR2 family. In terms of assembly, part of a unique SNARE complex composed of the Golgi SNAREs GOSR1, STX5 and YKT6. Interacts with BET1.

The protein localises to the golgi apparatus. Its subcellular location is the cis-Golgi network membrane. It is found in the golgi apparatus membrane. The protein resides in the endoplasmic reticulum membrane. Functionally, involved in transport of proteins from the cis/medial-Golgi to the trans-Golgi network. This Rattus norvegicus (Rat) protein is Golgi SNAP receptor complex member 2 (Gosr2).